The following is a 619-amino-acid chain: Dihydroxy-acid dehydratase (619 aa).

Mg(2+) is bound at residue Asp-81. Cys-122 provides a ligand contact to [2Fe-2S] cluster. Positions 123 and 124 each coordinate Mg(2+). N6-carboxylysine is present on Lys-124. Residue Cys-195 coordinates [2Fe-2S] cluster. A Mg(2+)-binding site is contributed by Glu-492. The active-site Proton acceptor is Ser-518.

The protein belongs to the IlvD/Edd family. In terms of assembly, homodimer. The cofactor is [2Fe-2S] cluster. It depends on Mg(2+) as a cofactor.

The catalysed reaction is (2R)-2,3-dihydroxy-3-methylbutanoate = 3-methyl-2-oxobutanoate + H2O. It catalyses the reaction (2R,3R)-2,3-dihydroxy-3-methylpentanoate = (S)-3-methyl-2-oxopentanoate + H2O. It participates in amino-acid biosynthesis; L-isoleucine biosynthesis; L-isoleucine from 2-oxobutanoate: step 3/4. It functions in the pathway amino-acid biosynthesis; L-valine biosynthesis; L-valine from pyruvate: step 3/4. In terms of biological role, functions in the biosynthesis of branched-chain amino acids. Catalyzes the dehydration of (2R,3R)-2,3-dihydroxy-3-methylpentanoate (2,3-dihydroxy-3-methylvalerate) into 2-oxo-3-methylpentanoate (2-oxo-3-methylvalerate) and of (2R)-2,3-dihydroxy-3-methylbutanoate (2,3-dihydroxyisovalerate) into 2-oxo-3-methylbutanoate (2-oxoisovalerate), the penultimate precursor to L-isoleucine and L-valine, respectively. This chain is Dihydroxy-acid dehydratase, found in Synechococcus elongatus (strain ATCC 33912 / PCC 7942 / FACHB-805) (Anacystis nidulans R2).